Consider the following 410-residue polypeptide: F-box protein At5g36730 (410 aa).

Residues 1–46 (MAMSNLPRDLLEEVLSRVPVKSIAAVRSTCKNWNSLTYGQSFTKKL) enclose the F-box domain.

In Arabidopsis thaliana (Mouse-ear cress), this protein is F-box protein At5g36730.